A 230-amino-acid chain; its full sequence is Ribonuclease HII (230 aa).

Positions 28 to 217 (FRIAGIDEAG…VKEHLPSQPD (190 aa)) constitute an RNase H type-2 domain. Positions 34, 35, and 126 each coordinate a divalent metal cation. The tract at residues 209-230 (KEHLPSQPDSDTAGPSTGLFSF) is disordered. Over residues 215 to 230 (QPDSDTAGPSTGLFSF) the composition is skewed to polar residues.

This sequence belongs to the RNase HII family. Mn(2+) serves as cofactor. Requires Mg(2+) as cofactor.

The protein localises to the cytoplasm. The catalysed reaction is Endonucleolytic cleavage to 5'-phosphomonoester.. Its function is as follows. Endonuclease that specifically degrades the RNA of RNA-DNA hybrids. This chain is Ribonuclease HII, found in Citrifermentans bemidjiense (strain ATCC BAA-1014 / DSM 16622 / JCM 12645 / Bem) (Geobacter bemidjiensis).